We begin with the raw amino-acid sequence, 218 residues long: Octanoyltransferase (218 aa).

In terms of domain architecture, BPL/LPL catalytic spans 34–209 (ETSRDELWIV…TFSQELGYQH (176 aa)). Residues 73 to 80 (RGGQVTYH), 140 to 142 (SLG), and 153 to 155 (GLA) contribute to the substrate site. Cysteine 171 serves as the catalytic Acyl-thioester intermediate.

Belongs to the LipB family.

It localises to the cytoplasm. The catalysed reaction is octanoyl-[ACP] + L-lysyl-[protein] = N(6)-octanoyl-L-lysyl-[protein] + holo-[ACP] + H(+). It participates in protein modification; protein lipoylation via endogenous pathway; protein N(6)-(lipoyl)lysine from octanoyl-[acyl-carrier-protein]: step 1/2. Its function is as follows. Catalyzes the transfer of endogenously produced octanoic acid from octanoyl-acyl-carrier-protein onto the lipoyl domains of lipoate-dependent enzymes. Lipoyl-ACP can also act as a substrate although octanoyl-ACP is likely to be the physiological substrate. This Shewanella loihica (strain ATCC BAA-1088 / PV-4) protein is Octanoyltransferase.